The chain runs to 274 residues: tRNA pseudouridine synthase A (274 aa).

Residue D51 is the Nucleophile of the active site. Y109 is a substrate binding site.

This sequence belongs to the tRNA pseudouridine synthase TruA family. Homodimer.

It carries out the reaction uridine(38/39/40) in tRNA = pseudouridine(38/39/40) in tRNA. Functionally, formation of pseudouridine at positions 38, 39 and 40 in the anticodon stem and loop of transfer RNAs. The protein is tRNA pseudouridine synthase A of Acidovorax sp. (strain JS42).